A 68-amino-acid chain; its full sequence is Large ribosomal subunit protein bL31 (68 aa).

4 residues coordinate Zn(2+): C16, C18, C37, and C40.

It belongs to the bacterial ribosomal protein bL31 family. Type A subfamily. In terms of assembly, part of the 50S ribosomal subunit. The cofactor is Zn(2+).

Binds the 23S rRNA. In Nitrosococcus oceani (strain ATCC 19707 / BCRC 17464 / JCM 30415 / NCIMB 11848 / C-107), this protein is Large ribosomal subunit protein bL31.